Consider the following 158-residue polypeptide: uncharacterized protein (158 aa).

One can recognise an HTH hxlR-type domain in the interval 13–110; the sequence is ESVGRALELV…WGDEYLPRPE (98 aa).

This is an uncharacterized protein from Mycobacterium tuberculosis (strain CDC 1551 / Oshkosh).